Reading from the N-terminus, the 73-residue chain is DNA-directed RNA polymerase subunit omega (73 aa).

It belongs to the RNA polymerase subunit omega family. As to quaternary structure, the RNAP catalytic core consists of 2 alpha, 1 beta, 1 beta' and 1 omega subunit. When a sigma factor is associated with the core the holoenzyme is formed, which can initiate transcription.

The catalysed reaction is RNA(n) + a ribonucleoside 5'-triphosphate = RNA(n+1) + diphosphate. Its function is as follows. Promotes RNA polymerase assembly. Latches the N- and C-terminal regions of the beta' subunit thereby facilitating its interaction with the beta and alpha subunits. The sequence is that of DNA-directed RNA polymerase subunit omega from Maridesulfovibrio salexigens (strain ATCC 14822 / DSM 2638 / NCIMB 8403 / VKM B-1763) (Desulfovibrio salexigens).